A 116-amino-acid chain; its full sequence is Somatostatin (116 aa).

A signal peptide spans 1-24; it reads MLSCRLQCALAALSIVLALGCVTG. The propeptide occupies 25–88; the sequence is APSDPRLRQF…QDEMRLELQR (64 aa). The residue at position 43 (Ala43) is an Alanine amide. The tract at residues 62–82 is disordered; sequence QTENDALEPEDLSQAAEQDEM. The cysteines at positions 105 and 116 are disulfide-linked.

The protein belongs to the somatostatin family. C-terminal amidation of the neuronostatin peptide is required for its biological activity, including for the regulation of mean arterial pressure.

The protein localises to the secreted. Functionally, inhibits the secretion of pituitary hormones, including that of growth hormone/somatotropin (GH1), PRL, ACTH, luteinizing hormone (LH) and TSH. Also impairs ghrelin- and GnRH-stimulated secretion of GH1 and LH; the inhibition of ghrelin-stimulated secretion of GH1 can be further increased by neuronostatin. May enhance low-glucose-induced glucagon release by pancreatic alpha cells. This effect may be mediated by binding to GPR107 and PKA activation. May regulate cardiac contractile function. May compromise cardiomyocyte viability. In the central nervous system, may impair memory retention and may affect hippocampal excitability. May also have anxiolytic and anorexigenic effects. May play a role in arterial pressure regulation. May inhibit basal, but not ghrelin- or GnRH-stimulated secretion of GH1 or LH, but does not affect the release of other pituitary hormones, including PRL, ACTH, FSH or TSH. Potentiates inhibitory action of somatostatin on ghrelin-stimulated secretion of GH1, but not that on GnRH-stimulated secretion of LH. In Homo sapiens (Human), this protein is Somatostatin (SST).